A 528-amino-acid polypeptide reads, in one-letter code: Glutamyl-tRNA(Gln) amidotransferase subunit B, mitochondrial (528 aa).

The N-terminal 21 residues, 1–21 (MSWRLSFRTNLLIYNVRRRNY), are a transit peptide targeting the mitochondrion.

This sequence belongs to the GatB/GatE family. GatB subfamily. As to quaternary structure, subunit of the heterotrimeric GatCAB amidotransferase (AdT) complex, composed of A, B and C subunits.

It localises to the mitochondrion. The enzyme catalyses L-glutamyl-tRNA(Gln) + L-glutamine + ATP + H2O = L-glutaminyl-tRNA(Gln) + L-glutamate + ADP + phosphate + H(+). Functionally, allows the formation of correctly charged Gln-tRNA(Gln) through the transamidation of misacylated Glu-tRNA(Gln) in the mitochondria. The reaction takes place in the presence of glutamine and ATP through an activated gamma-phospho-Glu-tRNA(Gln). The sequence is that of Glutamyl-tRNA(Gln) amidotransferase subunit B, mitochondrial from Aedes aegypti (Yellowfever mosquito).